The primary structure comprises 108 residues: UPF0145 protein YjfJ (108 aa).

This sequence belongs to the UPF0145 family.

This chain is UPF0145 protein YjfJ (yjfJ), found in Lactococcus lactis subsp. lactis (strain IL1403) (Streptococcus lactis).